The sequence spans 1156 residues: Reverse gyrase 1 (1156 aa).

The RG N-terminal-type zinc-finger motif lies at 1–38 (MLKVYYTFGCPNCGGPIDDEHLLAGVPCSKCLPGRVEN). Residues Cys-10, Cys-13, Cys-28, and Cys-31 each coordinate Zn(2+). ATP is bound by residues Gln-86 and 103 to 110 (APTGLGKT). The 188-residue stretch at 90–277 (IKRLAKSESF…ALRTLIGFEP (188 aa)) folds into the Helicase ATP-binding domain. Positions 184–187 (DDSD) match the DEAD box motif. The segment at 570-1156 (INIKTILLIV…VNSLKLDTNV (587 aa)) is topoisomerase I. A Toprim domain is found at 574–736 (TILLIVESPT…NIYRIKYHEI (163 aa)). Glu-580 lines the Mg(2+) pocket. An RG C-terminal-type zinc finger spans residues 655–682 (IYKCYNCGKTFTIKSNTCPYCGSVFISS). Positions 658, 661, 672, and 675 each coordinate Zn(2+). Asp-705 serves as a coordination point for Mg(2+). Residues 752-1143 (NMNLVKSQIV…DLHKEITQIS (392 aa)) form the Topo IA-type catalytic domain. Residue Tyr-895 is the O-(5'-phospho-DNA)-tyrosine intermediate of the active site.

The protein in the N-terminal section; belongs to the DEAD box helicase family. DDVD subfamily. In the C-terminal section; belongs to the type IA topoisomerase family. As to quaternary structure, monomer. It depends on Zn(2+) as a cofactor. Mg(2+) serves as cofactor.

It localises to the cytoplasm. The enzyme catalyses ATP + H2O = ADP + phosphate + H(+). Its function is as follows. Modifies the topological state of DNA by introducing positive supercoils in an ATP-dependent process, increasing the linking number in steps of +1. Binds to single-stranded DNA, transiently cleaves and then rejoins the ends, introducing a positive supercoil in the process. The scissile phosphodiester is attacked by the catalytic tyrosine of the enzyme, resulting in the formation of a DNA-(5'-phosphotyrosyl)-enzyme intermediate. Probably involved in rewinding DNA strands in regions of the chromosome that have opened up to allow replication, transcription, DNA repair and/or for DNA protection. This is Reverse gyrase 1 from Sulfurisphaera tokodaii (strain DSM 16993 / JCM 10545 / NBRC 100140 / 7) (Sulfolobus tokodaii).